A 386-amino-acid chain; its full sequence is V-type proton ATPase subunit B 2 (386 aa).

This sequence belongs to the ATPase alpha/beta chains family. In terms of assembly, V-ATPase is a heteromultimeric enzyme composed of a peripheral catalytic V1 complex (main components: subunits A, B, C, D, E, and F) attached to an integral membrane V0 proton pore complex (main component: the proteolipid protein).

Its function is as follows. Non-catalytic subunit of the peripheral V1 complex of vacuolar ATPase. V-ATPase is responsible for acidifying a variety of intracellular compartments in eukaryotic cells. In Gossypium hirsutum (Upland cotton), this protein is V-type proton ATPase subunit B 2.